Here is a 405-residue protein sequence, read N- to C-terminus: Aspartokinase (405 aa).

7-10 (KYGG) is a binding site for ATP. 25 to 30 (RIAHYR) provides a ligand contact to substrate. Position 41 (serine 41) interacts with ATP. Residues 47-49 (TDE), glutamate 74, 125-126 (LD), 150-153 (RGGS), and serine 153 each bind substrate. ATP is bound by residues 173 to 174 (TD), 179 to 184 (YTTDPH), and arginine 209. 2 ACT domains span residues 263–342 (IGLI…IAKV) and 344–405 (IVGV…LDKA). Substrate is bound by residues aspartate 270, 274 to 275 (IA), 288 to 290 (AVD), glutamine 294, 355 to 356 (VP), 369 to 370 (NI), and 376 to 377 (SE).

The protein belongs to the aspartokinase family. As to quaternary structure, heterotetramer consisting of 2 isoforms Alpha (catalytic and regulation) and of a homodimer of 2 isoforms Beta (regulation and thermostability).

The catalysed reaction is L-aspartate + ATP = 4-phospho-L-aspartate + ADP. It participates in amino-acid biosynthesis; L-lysine biosynthesis via DAP pathway; (S)-tetrahydrodipicolinate from L-aspartate: step 1/4. The protein operates within amino-acid biosynthesis; L-methionine biosynthesis via de novo pathway; L-homoserine from L-aspartate: step 1/3. It functions in the pathway amino-acid biosynthesis; L-threonine biosynthesis; L-threonine from L-aspartate: step 1/5. Its activity is regulated as follows. Inhibited by threonine. In terms of biological role, catalyzes the phosphorylation of the beta-carboxyl group of aspartic acid with ATP to yield 4-phospho-L-aspartate, which is involved in the branched biosynthetic pathway leading to the biosynthesis of amino acids threonine, isoleucine and methionine. The chain is Aspartokinase (ask) from Thermus thermophilus.